A 382-amino-acid chain; its full sequence is Proton extrusion protein PxcA (382 aa).

4 helical membrane passes run 156–176, 257–277, 305–325, and 340–360; these read TLISLKVLLLLILVPLLVQQV, AVKNVIADLAATVAFVVVCVF, IILFTDIFVGFHSPEGWTVLL, and FILLFIATFPVILATIFKYWI.

Belongs to the CemA family.

The protein resides in the cell inner membrane. Required for H(+) efflux immediately after light irradiation to form a rapid H(+) concentration gradient across the thylakoid membranes. Together with PxcL, contributes to transient H(+) uptake following dark to light transition. This chain is Proton extrusion protein PxcA, found in Synechococcus sp. (strain WH7803).